A 108-amino-acid chain; its full sequence is UPF0060 membrane protein Rsph17029_0436 (108 aa).

4 consecutive transmembrane segments (helical) span residues 5 to 25, 32 to 52, 62 to 82, and 86 to 106; these read LAAY…VWAW, ALWL…LALT, AVYG…VEGV, and RWDM…LWAP.

Belongs to the UPF0060 family.

It is found in the cell inner membrane. This Cereibacter sphaeroides (strain ATCC 17029 / ATH 2.4.9) (Rhodobacter sphaeroides) protein is UPF0060 membrane protein Rsph17029_0436.